A 132-amino-acid chain; its full sequence is Small ribosomal subunit protein uS12 (132 aa).

Position 89 is a 3-methylthioaspartic acid (Asp89). Residues 103-132 (DTSGVADRRQSRSKYGAKQPKEGGAAKGKK) form a disordered region.

It belongs to the universal ribosomal protein uS12 family. As to quaternary structure, part of the 30S ribosomal subunit. Contacts proteins S8 and S17. May interact with IF1 in the 30S initiation complex.

Its function is as follows. With S4 and S5 plays an important role in translational accuracy. Interacts with and stabilizes bases of the 16S rRNA that are involved in tRNA selection in the A site and with the mRNA backbone. Located at the interface of the 30S and 50S subunits, it traverses the body of the 30S subunit contacting proteins on the other side and probably holding the rRNA structure together. The combined cluster of proteins S8, S12 and S17 appears to hold together the shoulder and platform of the 30S subunit. The protein is Small ribosomal subunit protein uS12 of Chlorobium phaeovibrioides (strain DSM 265 / 1930) (Prosthecochloris vibrioformis (strain DSM 265)).